Reading from the N-terminus, the 1380-residue chain is DNA-directed RNA polymerase subunit beta (1380 aa).

The protein belongs to the RNA polymerase beta chain family. In terms of assembly, the RNAP catalytic core consists of 2 alpha, 1 beta, 1 beta' and 1 omega subunit. When a sigma factor is associated with the core the holoenzyme is formed, which can initiate transcription.

The catalysed reaction is RNA(n) + a ribonucleoside 5'-triphosphate = RNA(n+1) + diphosphate. DNA-dependent RNA polymerase catalyzes the transcription of DNA into RNA using the four ribonucleoside triphosphates as substrates. The polypeptide is DNA-directed RNA polymerase subunit beta (Ehrlichia ruminantium (strain Welgevonden)).